The following is a 418-amino-acid chain: 3-phosphoshikimate 1-carboxyvinyltransferase (418 aa).

Residues Lys26, Ser27, and Arg31 each coordinate 3-phosphoshikimate. Residue Lys26 participates in phosphoenolpyruvate binding. Residues Gly97 and Arg125 each contribute to the phosphoenolpyruvate site. Residues Ser170, Ser171, Gln172, Asp297, Asn320, and Lys324 each coordinate 3-phosphoshikimate. Gln172 provides a ligand contact to phosphoenolpyruvate. Asp297 acts as the Proton acceptor in catalysis. Arg328, Arg375, and Lys400 together coordinate phosphoenolpyruvate.

The protein belongs to the EPSP synthase family. Monomer.

The protein resides in the cytoplasm. The enzyme catalyses 3-phosphoshikimate + phosphoenolpyruvate = 5-O-(1-carboxyvinyl)-3-phosphoshikimate + phosphate. It functions in the pathway metabolic intermediate biosynthesis; chorismate biosynthesis; chorismate from D-erythrose 4-phosphate and phosphoenolpyruvate: step 6/7. Functionally, catalyzes the transfer of the enolpyruvyl moiety of phosphoenolpyruvate (PEP) to the 5-hydroxyl of shikimate-3-phosphate (S3P) to produce enolpyruvyl shikimate-3-phosphate and inorganic phosphate. In Pseudomonas syringae pv. syringae (strain B728a), this protein is 3-phosphoshikimate 1-carboxyvinyltransferase.